We begin with the raw amino-acid sequence, 1503 residues long: Mitogen-activated protein kinase-binding protein 1 (1503 aa).

WD repeat units lie at residues 89–130, 133–174, 176–214, 271–310, 337–376, 382–431, 472–511, 514–556, 560–601, 609–648, 654–693, and 696–735; these read SSRK…QVAE, EHKY…VVAS, KVSS…TSKV, VELR…FLST, ARYP…KVGK, YHSS…VHGS, DPRV…EMLK, AHDS…SLQQ, EHSS…EGVQ, VRKT…QKKL, GEDG…CVAT, and GHSE…TISM. Disordered stretches follow at residues 745-817, 874-917, and 951-1176; these read RQRG…SSPA, LAPS…RLQT, and VYPE…SWAS. Residues 784-796 are compositionally biased toward acidic residues; it reads KEGEDEGTEEEEL. 2 stretches are compositionally biased toward polar residues: residues 905–917 and 957–972; these read CVSQ…RLQT and DSPT…QAPT. Residues 1028–1043 are compositionally biased toward acidic residues; it reads DLEEPAEGDEDEEEEG. The segment covering 1058-1068 has biased composition (basic and acidic residues); that stretch reads PDQEQFLKQHF. Positions 1089–1129 are enriched in polar residues; sequence SQSISSRFLLQVQTSPLREPSLSSSGLALTSRPDQVSQVSG. At S1193 the chain carries Phosphoserine. Disordered regions lie at residues 1217–1238 and 1369–1391; these read QGSL…SYQN and QGPE…SSRP.

In terms of assembly, can form homodimers (via C-terminus). Interacts (via C-terminus) with WDR62 (via C-terminus). Interacts with MAPK9. Interacts (via N-terminus) with NOD2; the interaction is enhanced in presence of muramyl dipeptide (MDP). Interacts with MAPK10. In terms of tissue distribution, ubiquitously expressed. Highest expression observed in brain.

Its subcellular location is the cytoplasm. It is found in the nucleus. It localises to the cytoskeleton. The protein localises to the spindle pole. In terms of biological role, negative regulator of NOD2 function. It down-regulates NOD2-induced processes such as activation of NF-kappa-B signaling, IL8 secretion and antibacterial response. Involved in JNK signaling pathway. This Mus musculus (Mouse) protein is Mitogen-activated protein kinase-binding protein 1 (Mapkbp1).